The primary structure comprises 95 residues: Integration host factor subunit beta (95 aa).

This sequence belongs to the bacterial histone-like protein family. As to quaternary structure, heterodimer of an alpha and a beta chain.

Functionally, this protein is one of the two subunits of integration host factor, a specific DNA-binding protein that functions in genetic recombination as well as in transcriptional and translational control. In Ruegeria sp. (strain TM1040) (Silicibacter sp.), this protein is Integration host factor subunit beta.